The chain runs to 219 residues: Inner membrane protein YccA (219 aa).

The Periplasmic segment spans residues 1-22; it reads MDRIVSSSHDRTSLLSTHKVLR. A run of 2 helical transmembrane segments spans residues 23–43 and 44–64; these read NTYFLLSLTLAFSAITATAST and VLMLPSPGLILTLVGMYGLMF. Over 65–73 the chain is Periplasmic; it reads LTYKTANKP. A helical membrane pass occupies residues 74–94; the sequence is TGIISAFAFTGFLGYILGPIL. The Cytoplasmic segment spans residues 95-104; the sequence is NTYLSAGMGD. Residues 105–125 traverse the membrane as a helical segment; the sequence is VIAMALGGTALVFFCCSAYVL. Residues 126–133 lie on the Periplasmic side of the membrane; the sequence is TTRKDMSF. A helical membrane pass occupies residues 134 to 154; sequence LGGMLMAGIVVVLIGMVANIF. Over 155-157 the chain is Cytoplasmic; that stretch reads LQL. A helical membrane pass occupies residues 158–178; sequence PALHLAISAVFILISSGAILF. Over 179–195 the chain is Periplasmic; the sequence is ETSNIIHGGETNYIRAT. A helical transmembrane segment spans residues 196–216; it reads VSLYVSLYNIFVSLLSILGFA. Residues 217-219 are Cytoplasmic-facing; the sequence is SRD.

It belongs to the BI1 family.

It is found in the cell inner membrane. In Escherichia coli O6:H1 (strain CFT073 / ATCC 700928 / UPEC), this protein is Inner membrane protein YccA (yccA).